The following is a 450-amino-acid chain: UDP-N-acetylmuramate--L-alanine ligase (450 aa).

Residue 112–118 (GTHGKTT) coordinates ATP.

It belongs to the MurCDEF family.

The protein resides in the cytoplasm. It carries out the reaction UDP-N-acetyl-alpha-D-muramate + L-alanine + ATP = UDP-N-acetyl-alpha-D-muramoyl-L-alanine + ADP + phosphate + H(+). The protein operates within cell wall biogenesis; peptidoglycan biosynthesis. In terms of biological role, cell wall formation. This chain is UDP-N-acetylmuramate--L-alanine ligase, found in Endomicrobium trichonymphae.